Here is a 188-residue protein sequence, read N- to C-terminus: dCTP deaminase (188 aa).

Residues 111–116 (KSTYAR), 135–137 (TLE), Gln156, Tyr170, and Gln180 each bind dCTP. The active-site Proton donor/acceptor is the Glu137.

It belongs to the dCTP deaminase family. As to quaternary structure, homotrimer.

The enzyme catalyses dCTP + H2O + H(+) = dUTP + NH4(+). It participates in pyrimidine metabolism; dUMP biosynthesis; dUMP from dCTP (dUTP route): step 1/2. Its function is as follows. Catalyzes the deamination of dCTP to dUTP. The sequence is that of dCTP deaminase from Nitrosomonas eutropha (strain DSM 101675 / C91 / Nm57).